Reading from the N-terminus, the 148-residue chain is Dermatopontin (148 aa).

A disulfide bond links Cys-14 and Cys-40. Asn-44 is a glycosylation site (N-linked (GlcNAc...) asparagine). 2 disulfides stabilise this stretch: Cys-66–Cys-93 and Cys-103–Cys-147.

It belongs to the dermatopontin family. The terminal mannose residues of the polysaccharide are 3-O-methylated. No tyrosine sulfation was detected.

It localises to the secreted. The protein resides in the extracellular space. It is found in the extracellular matrix. Functionally, seems to mediate adhesion by cell surface integrin binding. The polypeptide is Dermatopontin (Biomphalaria glabrata (Bloodfluke planorb)).